Reading from the N-terminus, the 339-residue chain is Isopentenyl-diphosphate delta-isomerase (339 aa).

7 to 8 (RK) provides a ligand contact to substrate. Residues Ser65, 66 to 68 (SMT), Ser96, and Asn125 contribute to the FMN site. 96–98 (SQR) contributes to the substrate binding site. A substrate-binding site is contributed by Gln160. Glu161 is a Mg(2+) binding site. FMN contacts are provided by residues Lys192, Thr222, and 293-294 (AG).

The protein belongs to the IPP isomerase type 2 family. As to quaternary structure, homooctamer. Dimer of tetramers. Requires FMN as cofactor. NADPH serves as cofactor. The cofactor is Mg(2+).

It localises to the cytoplasm. The enzyme catalyses isopentenyl diphosphate = dimethylallyl diphosphate. Functionally, involved in the biosynthesis of isoprenoids. Catalyzes the 1,3-allylic rearrangement of the homoallylic substrate isopentenyl (IPP) to its allylic isomer, dimethylallyl diphosphate (DMAPP). In Vibrio campbellii (strain ATCC BAA-1116), this protein is Isopentenyl-diphosphate delta-isomerase.